Here is a 61-residue protein sequence, read N- to C-terminus: Translational regulator CsrA (61 aa).

This sequence belongs to the CsrA/RsmA family. In terms of assembly, homodimer; the beta-strands of each monomer intercalate to form a hydrophobic core, while the alpha-helices form wings that extend away from the core.

It localises to the cytoplasm. A key translational regulator that binds mRNA to regulate translation initiation and/or mRNA stability. Mediates global changes in gene expression, shifting from rapid growth to stress survival by linking envelope stress, the stringent response and the catabolite repression systems. Usually binds in the 5'-UTR; binding at or near the Shine-Dalgarno sequence prevents ribosome-binding, repressing translation, binding elsewhere in the 5'-UTR can activate translation and/or stabilize the mRNA. Its function is antagonized by small RNA(s). This chain is Translational regulator CsrA, found in Actinobacillus succinogenes (strain ATCC 55618 / DSM 22257 / CCUG 43843 / 130Z).